The primary structure comprises 52 residues: UPF0181 protein CGSHiGG_01050 (52 aa).

It belongs to the UPF0181 family.

The sequence is that of UPF0181 protein CGSHiGG_01050 from Haemophilus influenzae (strain PittGG).